The primary structure comprises 658 residues: Transmembrane 9 superfamily member 11 (658 aa).

The first 23 residues, 1–23 (MRSMDRFGIWVLAILLVIQSSFG), serve as a signal peptide directing secretion. Over 24-291 (FYLPGSYPHK…LKMEGSKVHW (268 aa)) the chain is Lumenal. A helical membrane pass occupies residues 292 to 312 (FSILNSLMVITFLAGIVLVIF). Topologically, residues 313–364 (LRTVRRDLTRYEELDKEAQAQMNEELSGWKLVVGDVFRAPSNASLLCVMVGD) are cytoplasmic. A helical membrane pass occupies residues 365–385 (GVQILGMAVVTILFAALGFMS). Residues 386-391 (PASRGT) are Lumenal-facing. A helical transmembrane segment spans residues 392 to 412 (LITGMLFFYMILGIAAGYVSV). Residues 413 to 432 (RLWRTIGCGEHRGWMSVAWK) are Cytoplasmic-facing. The chain crosses the membrane as a helical span at residues 433-453 (AACFFPGIAFLILTTLNFLLW). Residues 454 to 462 (GSHSTGAIP) lie on the Lumenal side of the membrane. Residues 463-483 (FSLFVILLLLWFCISVPLTLI) form a helical membrane-spanning segment. Residues 484 to 515 (GGYFGAKAPHIEFPVRTNQIPREIPAQKYPSW) are Cytoplasmic-facing. Residues 516–536 (LLVLGAGTLPFGTLFIELFFI) form a helical membrane-spanning segment. Residues 537 to 547 (MSSIWMGRVYY) lie on the Lumenal side of the membrane. A helical transmembrane segment spans residues 548–568 (VFGFLFVVLILLVVVCAEVSL). Topologically, residues 569-586 (VLTYMHLCVEDYKWWWKS) are cytoplasmic. Residues 587-607 (FFASGSVAIYIFIYSINYLVF) traverse the membrane as a helical segment. The Lumenal portion of the chain corresponds to 608 to 619 (DLKSLSGPVSAT). A helical membrane pass occupies residues 620-640 (LYLGYSLFMVLAIMLATGTVG). Topologically, residues 641-658 (FLSSFWFVHYLFSSVKLD) are cytoplasmic. An Endoplasmic reticulum export signal motif is present at residues 647–652 (FVHYLF). The Golgi retention signal motif lies at 656 to 658 (KLD).

Belongs to the nonaspanin (TM9SF) (TC 9.A.2) family.

The protein localises to the endosome membrane. The protein resides in the golgi apparatus membrane. The protein is Transmembrane 9 superfamily member 11 of Arabidopsis thaliana (Mouse-ear cress).